The following is a 303-amino-acid chain: 2-dehydropantoate 2-reductase (303 aa).

NADP(+) is bound by residues 7-12, asparagine 98, and alanine 122; that span reads GCGALG. Asparagine 98 is a binding site for substrate. The Proton donor role is filled by lysine 176. 4 residues coordinate substrate: asparagine 180, asparagine 184, asparagine 194, and serine 244. Glutamate 256 contacts NADP(+).

It belongs to the ketopantoate reductase family. As to quaternary structure, monomer.

The protein resides in the cytoplasm. The catalysed reaction is (R)-pantoate + NADP(+) = 2-dehydropantoate + NADPH + H(+). It participates in cofactor biosynthesis; (R)-pantothenate biosynthesis; (R)-pantoate from 3-methyl-2-oxobutanoate: step 2/2. In terms of biological role, catalyzes the NADPH-dependent reduction of ketopantoate into pantoic acid. The polypeptide is 2-dehydropantoate 2-reductase (panE) (Escherichia coli O157:H7).